A 1791-amino-acid polypeptide reads, in one-letter code: MMVFQSFILGNLVSLCMKIINSVVVVGLYYGFLTTFSIGPSYLFLLRARVMDEGEEGTEKKVSATTGFIAGQLMMFISIYYAPLHLALGRPHTITVLALPYLLFHFFWNNHKHFFDYGSTTRNEMRNLRIQCVFLNNLIFQLFNHFILPSSMLARLVNIYMFRCNNKMLFVTSSFVGWLIGHILFMKWVGLVLVWIQQNHSIRSNRSNVLIRSNKYKFLVSELRNSMARIFSILLFITCVYYLGRIPSPILTKKLKGTSETEERGGTKQDQEVSTEEAPFPSLFSEEREDLDQIDEIDEIRVNAKEQINKDDEFHIRTYYNYNKISENIDGNKENSNLEFLKIKKKEDSVLWFEKPLVTLIFDYKRWNRPNRYIKNDQIENAVRNEMSQYFFSACQSDGKDRISFSYPRNLSTFSEMIQKKIPSFRREKNPSDQFSTCWSLINEEKKENLKKEFLNRIEALDKEWSVEHILEKTTRFCHNETKKEYLPKIYDPFLHGISRGRTQRLFPFQIITKTYLKNPIGGSWINKIHGILLNINYQKFEQTIEKFNRKSSAIKKNLSFFSDPQEEKYKSEEESKIFKFLFDVVIADSNDQTLIKNFMDFHEIHKKVPRWSYKLRSDLEELEGENEETIPLEEPGIRARKAKRVVIFTDTEPHNEIYTNLKNNKNYDQNDEMVLIRYSQQSDFRREIIQGSMRPQRRKTVIWEFFQANMHSPLFFDRIDKFFFFSFDIRGLTKQILRNFMRKNEKKKLDKKDAERSKRKEKGRLKIAEVWDSFFFAQILRGFLLVTQSILRKYILLPLLIIIKNSVRMLLFQIPEWSEDLKDWKREMHVKCTYNRVPLSETEFPRNWLTDGIQIKILFPFYLKPWHKSKFHSSQKGRLKKTKDKGKKKDFCFLTVWGMETELPFGSAHKQPSFFGPISKELKKKMKKYKTKSFQVLRFFKERDKIFLKGAKEIKNWIMKNFVFIKGKRNDLSKGNRIPLLGLREIDELTETKNDSITSNPIIHELSVQNRSMEWKNSSFSENKIKNSIDRINTIRNQIEAISKEKKKITNSCNKPPYDSKIIESSKKKWQIVKSKNTRLIRKTFYFVKFCIEQLSLGIFGGIINIPRIITQLLFESTKQIRDKSIYKNEETQEKINKKKNTIYLISTIKKFKSNKKKISYDLCSLSQAYVFYKLSQLQVSNFSKLRAVLEYNICVTSLFVKNQIKDFFQEHGIFHYKLKEKTFLNSESNQWKNWLRSHYQYNLPEIVWARLVTEKWKNKINQDSLVLNQSLNKEDSYEKNQFDNYKKLNSFEADSLLNPKQNLKKDYIYNLFCYNSINSKETIFDMPLDIIIDNFLVSSFRGKSNIRGIGKFRTRKFLDWRILTFWFIKKVNIESAVDTTSKKKNIQTQAQNSERIHKITKTGLANQKKDFFDWMGMNEEILNYPIANFDFLFFPEFVLFSSTYKIKPWVIPIKLLLFNFNEKKTVNKKITRNQNVFIPSNETKNLRFYNLTKESADQGELESDNEKQRNPELALPNQEKNIEENYAESKIKKPENKKQYKPNTEVELDLFLTRYSRFQLRWNFFLNTKILNNIKIYCLLVRLKNPNEIAISSIERAEMNLDLLMIEKNFTFAKLMKKGILIIEPLRLSVKNDGQLIIYRTIGISLVHKNNHQISQREKKKIEKAITKYKKKTVNRKKKNSDFFAPENLLSPKRRREFRILICSKFKTKSTRYRNSRFDKNIQNCGQVLNQKKDLDKDKTNLMKLKFFLWPNFRLEDLACMNRYWFNTNNGNHFSMIRIHMYTRLKINS.

The next 6 membrane-spanning stretches (helical) occupy residues 19–39 (IINS…FSIG), 68–88 (FIAG…HLAL), 91–111 (PHTI…WNNH), 133–153 (VFLN…SSML), 176–196 (VGWL…LVWI), and 230–250 (IFSI…PSPI). Basic and acidic residues predominate over residues 257-271 (GTSETEERGGTKQDQ). Disordered stretches follow at residues 257 to 278 (GTSE…TEEA) and 1498 to 1521 (ADQG…PNQE).

The protein belongs to the TIC214 family. In terms of assembly, part of the Tic complex.

The protein resides in the plastid. It localises to the chloroplast inner membrane. Involved in protein precursor import into chloroplasts. May be part of an intermediate translocation complex acting as a protein-conducting channel at the inner envelope. The chain is Protein TIC 214 from Aethionema grandiflorum (Persian stone-cress).